Reading from the N-terminus, the 299-residue chain is Glutamate formimidoyltransferase (299 aa).

The active-site For formimidoyltransferase activity is H82. 163 to 172 (GDRKIHPTAG) serves as a coordination point for folate.

This sequence belongs to the formiminotransferase family.

Its subcellular location is the cytoplasm. It catalyses the reaction (6S)-5-formyl-5,6,7,8-tetrahydrofolate + L-glutamate = N-formyl-L-glutamate + (6S)-5,6,7,8-tetrahydrofolate + H(+). It carries out the reaction 5-formimidoyltetrahydrofolate + L-glutamate = N-formimidoyl-L-glutamate + (6S)-5,6,7,8-tetrahydrofolate. The catalysed reaction is (6S)-5-formyl-5,6,7,8-tetrahydrofolate + ATP = (6R)-5,10-methenyltetrahydrofolate + ADP + phosphate. It participates in amino-acid degradation; L-histidine degradation into L-glutamate; L-glutamate from N-formimidoyl-L-glutamate (transferase route): step 1/1. Its pathway is one-carbon metabolism; tetrahydrofolate interconversion. Functionally, catalyzes the transfer of the formyl group from N-formylglutamate to tetrahydrofolate (THF) to yield 5-formyltetrahydrofolate (5-CHO-THF) and glutamate (Glu). The triglutamate form of 5-CHO-THF (5-CHO-THF-Glu3) can also be used as substrate. It can also catalyze the transfer of the formimino group from N-formiminoglutamate to tetrahydrofolate (THF) to yield 5-formiminotetrahydrofolate (5-NH=CH-THF) and glutamate (Glu). It can replace YgfA to catalyze the irreversible ATP-dependent transformation of 5-CHO-THF to form 5,10-methenyltetrahydrofolate (5,10-CH=THF). The sequence is that of Glutamate formimidoyltransferase from Streptococcus pyogenes serotype M1.